The following is a 75-amino-acid chain: Putative defensin-like protein 119 (75 aa).

The signal sequence occupies residues 1–25; it reads MAKSTIFAIFMIVFVLGMVTKETKG. 4 disulfides stabilise this stretch: cysteine 29–cysteine 73, cysteine 39–cysteine 58, cysteine 44–cysteine 67, and cysteine 48–cysteine 69.

This sequence belongs to the DEFL family.

The protein localises to the secreted. This Arabidopsis thaliana (Mouse-ear cress) protein is Putative defensin-like protein 119 (LCR53).